A 324-amino-acid polypeptide reads, in one-letter code: Beta-ketoacyl-[acyl-carrier-protein] synthase III (324 aa).

Catalysis depends on residues cysteine 114 and histidine 251. The ACP-binding stretch occupies residues 252–256 (QANRR). The active site involves asparagine 281.

It belongs to the thiolase-like superfamily. FabH family. As to quaternary structure, homodimer.

It localises to the cytoplasm. It carries out the reaction malonyl-[ACP] + acetyl-CoA + H(+) = 3-oxobutanoyl-[ACP] + CO2 + CoA. The protein operates within lipid metabolism; fatty acid biosynthesis. Functionally, catalyzes the condensation reaction of fatty acid synthesis by the addition to an acyl acceptor of two carbons from malonyl-ACP. Catalyzes the first condensation reaction which initiates fatty acid synthesis and may therefore play a role in governing the total rate of fatty acid production. Possesses both acetoacetyl-ACP synthase and acetyl transacylase activities. Its substrate specificity determines the biosynthesis of branched-chain and/or straight-chain of fatty acids. The sequence is that of Beta-ketoacyl-[acyl-carrier-protein] synthase III from Paramagnetospirillum magneticum (strain ATCC 700264 / AMB-1) (Magnetospirillum magneticum).